Here is a 1020-residue protein sequence, read N- to C-terminus: UPF0182 protein jk1603 (1020 aa).

Over residues 1–18 (MSTPTPPSSGRPKQPFPS) the composition is skewed to pro residues. The interval 1 to 23 (MSTPTPPSSGRPKQPFPSSPGSS) is disordered. 7 consecutive transmembrane segments (helical) span residues 28–48 (ILGI…VVVS), 73–93 (LVLF…AAFL), 125–145 (FLVG…QSNW), 175–195 (LPFL…AFVI), 227–247 (LAVI…FDRY), 272–292 (QIVL…TIVL), and 300–320 (LAVA…PAML). A disordered region spans residues 924 to 998 (QEIDGSVVDP…KVNKTRESGT (75 aa)). 2 stretches are compositionally biased toward basic and acidic residues: residues 942–961 (KGDK…EQSS) and 969–998 (KSDD…ESGT).

This sequence belongs to the UPF0182 family.

The protein localises to the cell membrane. The sequence is that of UPF0182 protein jk1603 from Corynebacterium jeikeium (strain K411).